We begin with the raw amino-acid sequence, 1355 residues long: DNA-directed RNA polymerase subunit beta' (1355 aa).

Zn(2+) is bound by residues Cys219, Cys293, Cys300, and Cys303. The tract at residues 1331–1355 is disordered; the sequence is AEVEVDDEVDDDYEDDDEDDDDYED.

It belongs to the RNA polymerase beta' chain family. RpoC2 subfamily. As to quaternary structure, in cyanobacteria the RNAP catalytic core is composed of 2 alpha, 1 beta, 1 beta', 1 gamma and 1 omega subunit. When a sigma factor is associated with the core the holoenzyme is formed, which can initiate transcription. The cofactor is Zn(2+).

The enzyme catalyses RNA(n) + a ribonucleoside 5'-triphosphate = RNA(n+1) + diphosphate. In terms of biological role, DNA-dependent RNA polymerase catalyzes the transcription of DNA into RNA using the four ribonucleoside triphosphates as substrates. The protein is DNA-directed RNA polymerase subunit beta' of Nostoc sp. (strain PCC 7120 / SAG 25.82 / UTEX 2576).